The chain runs to 376 residues: Succinyl-diaminopimelate desuccinylase (376 aa).

H67 is a binding site for Zn(2+). The active site involves D69. Zn(2+) is bound at residue D100. E134 acts as the Proton acceptor in catalysis. Zn(2+) is bound by residues E135, E163, and H349.

Belongs to the peptidase M20A family. DapE subfamily. As to quaternary structure, homodimer. Zn(2+) is required as a cofactor. Co(2+) serves as cofactor.

The catalysed reaction is N-succinyl-(2S,6S)-2,6-diaminopimelate + H2O = (2S,6S)-2,6-diaminopimelate + succinate. Its pathway is amino-acid biosynthesis; L-lysine biosynthesis via DAP pathway; LL-2,6-diaminopimelate from (S)-tetrahydrodipicolinate (succinylase route): step 3/3. Its function is as follows. Catalyzes the hydrolysis of N-succinyl-L,L-diaminopimelic acid (SDAP), forming succinate and LL-2,6-diaminopimelate (DAP), an intermediate involved in the bacterial biosynthesis of lysine and meso-diaminopimelic acid, an essential component of bacterial cell walls. The polypeptide is Succinyl-diaminopimelate desuccinylase (Proteus mirabilis (strain HI4320)).